Reading from the N-terminus, the 137-residue chain is Small ribosomal subunit protein uS11 (137 aa).

2 disordered regions span residues 1–31 (MPPK…AAHI) and 117–137 (TISD…RRRV). A compositionally biased stretch (basic residues) spans 12-21 (KTQKARRRDK).

It belongs to the universal ribosomal protein uS11 family. In terms of assembly, part of the 30S ribosomal subunit. Interacts with proteins S7 and S18. Binds to IF-3.

Functionally, located on the platform of the 30S subunit, it bridges several disparate RNA helices of the 16S rRNA. Forms part of the Shine-Dalgarno cleft in the 70S ribosome. The polypeptide is Small ribosomal subunit protein uS11 (Rhodococcus jostii (strain RHA1)).